The chain runs to 496 residues: Glycerol kinase (496 aa).

An ADP-binding site is contributed by T12. ATP is bound by residues T12, T13, and S14. Position 12 (T12) interacts with sn-glycerol 3-phosphate. Residue R16 coordinates ADP. Residues R82, E83, and Y134 each contribute to the sn-glycerol 3-phosphate site. Residues R82, E83, and Y134 each coordinate glycerol. H230 carries the post-translational modification Phosphohistidine; by HPr. Residue D244 participates in sn-glycerol 3-phosphate binding. Positions 244 and 245 each coordinate glycerol. The ADP site is built by T266 and G309. 4 residues coordinate ATP: T266, G309, Q313, and G410. ADP-binding residues include G410 and N414.

Belongs to the FGGY kinase family. In terms of assembly, homotetramer and homodimer (in equilibrium). The phosphoenolpyruvate-dependent sugar phosphotransferase system (PTS), including enzyme I, and histidine-containing protein (HPr) are required for the phosphorylation, which leads to the activation of the enzyme.

It carries out the reaction glycerol + ATP = sn-glycerol 3-phosphate + ADP + H(+). It participates in polyol metabolism; glycerol degradation via glycerol kinase pathway; sn-glycerol 3-phosphate from glycerol: step 1/1. Its activity is regulated as follows. Activated by phosphorylation and inhibited by fructose 1,6-bisphosphate (FBP). In terms of biological role, key enzyme in the regulation of glycerol uptake and metabolism. Catalyzes the phosphorylation of glycerol to yield sn-glycerol 3-phosphate. This chain is Glycerol kinase, found in Geobacillus sp. (strain WCH70).